Reading from the N-terminus, the 274-residue chain is TATA box-binding protein-associated factor RNA polymerase I subunit D (274 aa).

A compositionally biased stretch (polar residues) spans 1–19 (MDSLNYTTACDSAVETENQ). Disordered regions lie at residues 1–45 (MDSL…RQRN) and 84–111 (NKKRKRKKKKYKPTGRSVGRPKGRRTTR). At S20 the chain carries Phosphoserine. Basic residues predominate over residues 84–110 (NKKRKRKKKKYKPTGRSVGRPKGRRTT). Phosphoserine is present on residues S132 and S229.

In terms of assembly, component of the transcription factor SL1/TIF-IB complex, composed of TBP and at least TAF1A, TAF1B, TAF1C and TAF1D. Interacts with UBTF.

The protein localises to the nucleus. Functionally, component of the transcription factor SL1/TIF-IB complex, which is involved in the assembly of the PIC (preinitiation complex) during RNA polymerase I-dependent transcription. The rate of PIC formation probably is primarily dependent on the rate of association of SL1/TIF-IB with the rDNA promoter. SL1/TIF-IB is involved in stabilization of nucleolar transcription factor 1/UBTF on rDNA. Formation of SL1/TIF-IB excludes the association of TBP with TFIID subunits. This is TATA box-binding protein-associated factor RNA polymerase I subunit D (TAF1D) from Bos taurus (Bovine).